The sequence spans 244 residues: Heat shock transcription factor (244 aa).

A DNA-binding region spans residues 13–108 (IPKFIMKLYK…LLGFDDSLRM (96 aa)). Positions 123–168 (DGSLKEIVEYLYVQNQELYTELSVCKERIERQERALNGLIEILSRV) are involved in trimerization. Positions 204-244 (EGCEPASPPLQDKGIPELSFKPGGIPHADSDTKDDNYDPFF) are disordered. Positions 231-244 (ADSDTKDDNYDPFF) are enriched in basic and acidic residues.

This sequence belongs to the HSF family. Homotrimer. Homotrimerization increases the affinity of HSF1 to DNA.

It localises to the nucleus. In terms of biological role, DNA-binding transcription factor that specifically binds heat shock promoter elements (HSE) and activates transcription. The protein is Heat shock transcription factor of Encephalitozoon cuniculi (strain GB-M1) (Microsporidian parasite).